The primary structure comprises 506 residues: Maturase K (506 aa).

Belongs to the intron maturase 2 family. MatK subfamily.

The protein localises to the plastid. Its subcellular location is the chloroplast. Its function is as follows. Usually encoded in the trnK tRNA gene intron. Probably assists in splicing its own and other chloroplast group II introns. In Jasminum nudiflorum (Winter jasmine), this protein is Maturase K.